We begin with the raw amino-acid sequence, 424 residues long: MLRDQQIFDLIIEEQDRQIHGLELIASENFVSDQVMEAAGSVLTNKYAEGYPGKRYYGGCEVVDVIEQIAIDRAKDLFGAEYANVQPHSGSQANTAVFAACLKPGDTILGFDLSHGGHLTHGSPVNFSGKLYNPTFYGVEPETGMLNYDKIQEIATKEQPKLIIAGASAYSRDMDFERFRKIADSVGAILMADISHPAGLIAKGLMNDPIPHCHIITTTTHKTLRGPRGGLIMMGKDFENPWGLKTPKGEIRMMSHVLDMSVFPGNQGGPLEHIIAAKAVAFGEALTDEFFRYAMQVQKNAKAMAAAFVKRDYHIISGGTDNHMMLIDLRNKNISGKEAENALVKAEITVNKNMVPFDDKSPFVTSGIRVGTPAITTRGLLEEDMETIVAFIDKVIMNHTNEEILEEVADAVNEMMGERAIFVF.

(6S)-5,6,7,8-tetrahydrofolate contacts are provided by residues leucine 113 and 117–119 (GHL). Residue lysine 222 is modified to N6-(pyridoxal phosphate)lysine. 361–363 (SPF) is a (6S)-5,6,7,8-tetrahydrofolate binding site.

Belongs to the SHMT family. As to quaternary structure, homodimer. Requires pyridoxal 5'-phosphate as cofactor.

It is found in the cytoplasm. It carries out the reaction (6R)-5,10-methylene-5,6,7,8-tetrahydrofolate + glycine + H2O = (6S)-5,6,7,8-tetrahydrofolate + L-serine. Its pathway is one-carbon metabolism; tetrahydrofolate interconversion. It participates in amino-acid biosynthesis; glycine biosynthesis; glycine from L-serine: step 1/1. Functionally, catalyzes the reversible interconversion of serine and glycine with tetrahydrofolate (THF) serving as the one-carbon carrier. This reaction serves as the major source of one-carbon groups required for the biosynthesis of purines, thymidylate, methionine, and other important biomolecules. Also exhibits THF-independent aldolase activity toward beta-hydroxyamino acids, producing glycine and aldehydes, via a retro-aldol mechanism. This chain is Serine hydroxymethyltransferase, found in Flavobacterium psychrophilum (strain ATCC 49511 / DSM 21280 / CIP 103535 / JIP02/86).